A 287-amino-acid chain; its full sequence is MLARFPLYLRLVRMDKPIGSLLLLWPTLNALWIASDGRPRWPLLVIFTLGTLLMRSAGCAMNDYADRDFDRHVKRTADRPLTSGKIRAWEAVAIAVGLSFIAFLLILPLNTLTKELSVVALFVAGSYPFMKRFFAIPQAYLGIAFGFGIPMAFAAVQDTVPMLAWVMLVANIFWSVAYDTEYAMVDRDDDIKIGIRTSALTFGRFDVAAVMACYAATLGIYVWIGVTLGFGLAYWVGWAAAVGCALYHYTLIKDRERMPCFAAFRHNNWLGGVLFAGIAAHYLLAGN.

The next 6 helical transmembrane spans lie at 41–61, 89–109, 133–153, 158–178, 202–224, and 266–286; these read WPLL…GCAM, WEAV…ILPL, FFAI…PMAF, DTVP…SVAY, FGRF…YVWI, and HNNW…LLAG.

It belongs to the UbiA prenyltransferase family. The cofactor is Mg(2+).

It is found in the cell inner membrane. The enzyme catalyses all-trans-octaprenyl diphosphate + 4-hydroxybenzoate = 4-hydroxy-3-(all-trans-octaprenyl)benzoate + diphosphate. It functions in the pathway cofactor biosynthesis; ubiquinone biosynthesis. Functionally, catalyzes the prenylation of para-hydroxybenzoate (PHB) with an all-trans polyprenyl group. Mediates the second step in the final reaction sequence of ubiquinone-8 (UQ-8) biosynthesis, which is the condensation of the polyisoprenoid side chain with PHB, generating the first membrane-bound Q intermediate 3-octaprenyl-4-hydroxybenzoate. In Burkholderia cenocepacia (strain HI2424), this protein is 4-hydroxybenzoate octaprenyltransferase.